The following is a 2225-amino-acid chain: Multifunctional protein pyr1-3 (2225 aa).

Met1 bears the N-acetylmethionine mark. The GATase (Glutamine amidotransferase) stretch occupies residues 40–390; the sequence is MVGYNESISD…NVCGEQQHKS (351 aa). L-glutamine contacts are provided by Ser51, Gly245, and Gly247. The 193-residue stretch at 196 to 388 folds into the Glutamine amidotransferase type-1 domain; sequence KVIVLDCGIK…VDNVCGEQQH (193 aa). Cys275 functions as the Nucleophile; for GATase activity in the catalytic mechanism. L-glutamine is bound by residues Gln279, Asn317, Gly319, and Phe320. Residues His361 and Glu363 each act as for GATase activity in the active site. Positions 391-405 are linker; it reads PMNKSKIIDCPKGIN. Residues 406-948 are CPSase A; it reads KVLILGSGGL…TNDVNINEKS (543 aa). The tract at residues 406-1461 is CPSase (Carbamoyl-phosphate synthase); sequence KVLILGSGGL…MKGPMPIENV (1056 aa). 11 residues coordinate ATP: Arg526, Arg566, Gly572, Gly573, Lys603, Glu610, Gly636, Ile637, His638, Gln679, and Glu693. 2 ATP-grasp domains span residues 530 to 722 and 1069 to 1260; these read AEKL…KVAL and SRLL…KIII. The Mg(2+) site is built by Gln679, Glu693, and Asn695. Gln679, Glu693, and Asn695 together coordinate Mn(2+). Residues 949–1461 form a CPSase B region; that stretch reads YITLGSGSYR…MKGPMPIENV (513 aa). Residues Arg1105, Lys1144, Ile1146, Glu1151, Gly1176, Val1177, His1178, Ser1179, Gln1219, and Glu1231 each coordinate ATP. Gln1219, Glu1231, and Asn1233 together coordinate Mg(2+). Positions 1219, 1231, and 1233 each coordinate Mn(2+). The 147-residue stretch at 1324 to 1470 folds into the MGS-like domain; it reads FKAPEKNVLL…VDWRTSNKII (147 aa). Residues 1463 to 1797 are DHOase (dihydroorotase); the sequence is WRTSNKIIRL…VRGKVVKVVL (335 aa). Residues His1479 and His1481 each contribute to the Zn(2+) site. (S)-dihydroorotate contacts are provided by Arg1483 and Asn1513. Zn(2+) is bound by residues Lys1564, His1599, Cys1622, His1623, and Glu1646. Lys1564 bears the N6-carboxylysine mark. Arg1670 provides a ligand contact to (S)-dihydroorotate. A Zn(2+)-binding site is contributed by Asp1695. The For DHOase activity role is filled by Asp1695. (S)-dihydroorotate contacts are provided by His1699 and Pro1711. The segment at 1798–1916 is linker; it reads RGQIAFIDGK…DTLQTAFNIS (119 aa). An ATCase (Aspartate transcarbamylase) region spans residues 1917–2225; it reads DNSLAGKHIF…LLALVFGAGV (309 aa). Arg1974 and Thr1975 together coordinate carbamoyl phosphate. Lys2002 contributes to the L-aspartate binding site. Carbamoyl phosphate contacts are provided by Arg2023, His2051, and Gln2054. L-aspartate is bound by residues Arg2084 and Arg2145. Positions 2184 and 2185 each coordinate carbamoyl phosphate.

The protein in the N-terminal section; belongs to the CarA family. In the 2nd section; belongs to the CarB family. It in the 3rd section; belongs to the metallo-dependent hydrolases superfamily. DHOase family. CAD subfamily. This sequence in the C-terminal section; belongs to the aspartate/ornithine carbamoyltransferase superfamily. ATCase family. In terms of assembly, homohexamer. Requires Mg(2+) as cofactor. Mn(2+) is required as a cofactor. The cofactor is Zn(2+).

The protein localises to the cytoplasm. It carries out the reaction hydrogencarbonate + L-glutamine + 2 ATP + H2O = carbamoyl phosphate + L-glutamate + 2 ADP + phosphate + 2 H(+). It catalyses the reaction L-glutamine + H2O = L-glutamate + NH4(+). The enzyme catalyses hydrogencarbonate + NH4(+) + 2 ATP = carbamoyl phosphate + 2 ADP + phosphate + 2 H(+). The catalysed reaction is carbamoyl phosphate + L-aspartate = N-carbamoyl-L-aspartate + phosphate + H(+). It carries out the reaction (S)-dihydroorotate + H2O = N-carbamoyl-L-aspartate + H(+). Its pathway is pyrimidine metabolism; UMP biosynthesis via de novo pathway; (S)-dihydroorotate from bicarbonate: step 1/3. It participates in pyrimidine metabolism; UMP biosynthesis via de novo pathway; (S)-dihydroorotate from bicarbonate: step 2/3. The protein operates within pyrimidine metabolism; UMP biosynthesis via de novo pathway; (S)-dihydroorotate from bicarbonate: step 3/3. With respect to regulation, allosterically regulated and controlled by phosphorylation. 5-phosphoribose 1-diphosphate is an activator while UMP is an inhibitor of the CPSase reaction. Functionally, multifunctional protein that encodes the first 3 enzymatic activities of the de novo pyrimidine pathway: carbamoylphosphate synthetase (CPSase; EC 6.3.5.5), aspartate transcarbamylase (ATCase; EC 2.1.3.2) and dihydroorotase (DHOase; EC 3.5.2.3). The CPSase-function is accomplished in 2 steps, by a glutamine-dependent amidotransferase activity (GATase) that binds and cleaves glutamine to produce ammonia, followed by an ammonium-dependent carbamoyl phosphate synthetase, which reacts with the ammonia, hydrogencarbonate and ATP to form carbamoyl phosphate. The endogenously produced carbamoyl phosphate is sequestered and channeled to the ATCase active site. ATCase then catalyzes the formation of carbamoyl-L-aspartate from L-aspartate and carbamoyl phosphate. In the last step, DHOase catalyzes the cyclization of carbamoyl aspartate to dihydroorotate. The protein is Multifunctional protein pyr1-3 (pyr1-3) of Dictyostelium discoideum (Social amoeba).